We begin with the raw amino-acid sequence, 430 residues long: FAD-dependent monooxygenase asL4 (430 aa).

Residues 11 to 14 (GGIA), 33 to 34 (ER), Arg-108, and Tyr-278 contribute to the FAD site.

It belongs to the aromatic-ring hydroxylase family. FAD is required as a cofactor.

It functions in the pathway secondary metabolite biosynthesis; terpenoid biosynthesis. Functionally, flavin-dependent monooxygenase; part of the gene cluster that mediates the biosynthesis of xenovulene A, an unusual meroterpenoid that has potent inhibitory effects on the human gamma-aminobutyrate A (GABAA) benzodiazepine receptor. The first step of xenovulene A biosynthesis is the biosynthesis of 3-methylorcinaldehyde performed by the non-reducing polyketide synthase aspks1. The salicylate hydroxylase asL1 then catalyzes the oxidative dearomatization of 3-methylorcinaldehyde to yield a dearomatized hydroxycyclohexadione. The 2-oxoglutarate-dependent dioxygenase asL3 further catalyzes the oxidative ring expansion to provide the first tropolone metabolite. The cytochrome P450 monooxygenase asR2 allows the synthesis of tropolone hemiacetal. In parallel, a previously unrecognised class of terpene cyclase, asR6, produces alpha-humulene from farnesylpyrophosphate (FPP). The putative Diels-Alderase asR5 probably catalyzes the formation of the tropolone-humulene skeleton by linking humulene and the polyketide moiety. Oxidative-ring contractions catalyzed by asL4 and asL6 then processively remove carbon atoms from the polyketide to yield xenovulene A. In Sarocladium schorii (Acremonium strictum (strain IMI 501407)), this protein is FAD-dependent monooxygenase asL4.